The following is a 56-amino-acid chain: Ovomucoid (56 aa).

Residues 6 to 56 (VDCSEYPKPDCTLEYRPLCGSDNKTYANKCNFCNAVVESNGTLTLSHFGKC) enclose the Kazal-like domain. Disulfide bonds link Cys-8–Cys-38, Cys-16–Cys-35, and Cys-24–Cys-56. N-linked (GlcNAc...) asparagine glycosylation is present at Asn-45.

Its subcellular location is the secreted. The polypeptide is Ovomucoid (Callipepla squamata castanogastris (Chestnut bellied scaled quail)).